The chain runs to 316 residues: 4-hydroxy-3-methylbut-2-enyl diphosphate reductase (316 aa).

Cys12 provides a ligand contact to [4Fe-4S] cluster. (2E)-4-hydroxy-3-methylbut-2-enyl diphosphate is bound by residues His41 and His74. Positions 41 and 74 each coordinate dimethylallyl diphosphate. Residues His41 and His74 each coordinate isopentenyl diphosphate. Cys96 contributes to the [4Fe-4S] cluster binding site. Position 124 (His124) interacts with (2E)-4-hydroxy-3-methylbut-2-enyl diphosphate. His124 contacts dimethylallyl diphosphate. His124 contributes to the isopentenyl diphosphate binding site. Glu126 (proton donor) is an active-site residue. Residue Thr169 coordinates (2E)-4-hydroxy-3-methylbut-2-enyl diphosphate. Cys199 lines the [4Fe-4S] cluster pocket. Residues Ser227, Ser228, Asn229, and Ser271 each coordinate (2E)-4-hydroxy-3-methylbut-2-enyl diphosphate. Residues Ser227, Ser228, Asn229, and Ser271 each coordinate dimethylallyl diphosphate. Isopentenyl diphosphate is bound by residues Ser227, Ser228, Asn229, and Ser271.

It belongs to the IspH family. It depends on [4Fe-4S] cluster as a cofactor.

It carries out the reaction isopentenyl diphosphate + 2 oxidized [2Fe-2S]-[ferredoxin] + H2O = (2E)-4-hydroxy-3-methylbut-2-enyl diphosphate + 2 reduced [2Fe-2S]-[ferredoxin] + 2 H(+). It catalyses the reaction dimethylallyl diphosphate + 2 oxidized [2Fe-2S]-[ferredoxin] + H2O = (2E)-4-hydroxy-3-methylbut-2-enyl diphosphate + 2 reduced [2Fe-2S]-[ferredoxin] + 2 H(+). It participates in isoprenoid biosynthesis; dimethylallyl diphosphate biosynthesis; dimethylallyl diphosphate from (2E)-4-hydroxy-3-methylbutenyl diphosphate: step 1/1. The protein operates within isoprenoid biosynthesis; isopentenyl diphosphate biosynthesis via DXP pathway; isopentenyl diphosphate from 1-deoxy-D-xylulose 5-phosphate: step 6/6. Functionally, catalyzes the conversion of 1-hydroxy-2-methyl-2-(E)-butenyl 4-diphosphate (HMBPP) into a mixture of isopentenyl diphosphate (IPP) and dimethylallyl diphosphate (DMAPP). Acts in the terminal step of the DOXP/MEP pathway for isoprenoid precursor biosynthesis. In Stenotrophomonas maltophilia (strain K279a), this protein is 4-hydroxy-3-methylbut-2-enyl diphosphate reductase.